Here is a 253-residue protein sequence, read N- to C-terminus: tRNA pseudouridine synthase A (253 aa).

The active-site Nucleophile is the Asp51. Residue Tyr110 coordinates substrate.

Belongs to the tRNA pseudouridine synthase TruA family. In terms of assembly, homodimer.

The catalysed reaction is uridine(38/39/40) in tRNA = pseudouridine(38/39/40) in tRNA. Formation of pseudouridine at positions 38, 39 and 40 in the anticodon stem and loop of transfer RNAs. In Wolinella succinogenes (strain ATCC 29543 / DSM 1740 / CCUG 13145 / JCM 31913 / LMG 7466 / NCTC 11488 / FDC 602W) (Vibrio succinogenes), this protein is tRNA pseudouridine synthase A.